A 357-amino-acid polypeptide reads, in one-letter code: SrfA-induced gene J protein (357 aa).

Residues 1–29 (MGRVEDQIKDNYNSLSHEGERLNREAKIE) form a disordered region. A coiled-coil region spans residues 5-51 (EDQIKDNYNSLSHEGERLNREAKIESEKLKNNAKLDAKDMKKDIDES). The span at 17–29 (HEGERLNREAKIE) shows a compositional bias: basic and acidic residues. N-linked (GlcNAc...) asparagine glycans are attached at residues Asn-114, Asn-157, and Asn-172. 2 coiled-coil regions span residues 150–177 (KNFK…SNKI) and 223–270 (DETK…DAIE). Residues 290–307 (IWGSIGLIGGATATSYLF) form a helical membrane-spanning segment.

The protein localises to the membrane. In Dictyostelium discoideum (Social amoeba), this protein is SrfA-induced gene J protein (sigJ).